The primary structure comprises 283 residues: Elongation factor Ts (283 aa).

The tract at residues 80-83 is involved in Mg(2+) ion dislocation from EF-Tu; the sequence is TDFV.

This sequence belongs to the EF-Ts family.

The protein localises to the cytoplasm. Its function is as follows. Associates with the EF-Tu.GDP complex and induces the exchange of GDP to GTP. It remains bound to the aminoacyl-tRNA.EF-Tu.GTP complex up to the GTP hydrolysis stage on the ribosome. The sequence is that of Elongation factor Ts from Klebsiella pneumoniae (strain 342).